Reading from the N-terminus, the 375-residue chain is Histidine biosynthesis bifunctional protein HisB (375 aa).

Residues 1-168 (MTPIVFIDRD…GIAHTLADAP (168 aa)) are histidinol-phosphatase. The Nucleophile role is filled by Asp8. Asp8, Asp10, and Asp128 together coordinate Mg(2+). Asp10 (proton donor) is an active-site residue. The interval 169-375 (RRAVVQRHTK…HVLPSTKGAL (207 aa)) is imidazoleglycerol-phosphate dehydratase.

This sequence in the N-terminal section; belongs to the histidinol-phosphatase family. The protein in the C-terminal section; belongs to the imidazoleglycerol-phosphate dehydratase family. Mg(2+) serves as cofactor.

The protein resides in the cytoplasm. It catalyses the reaction D-erythro-1-(imidazol-4-yl)glycerol 3-phosphate = 3-(imidazol-4-yl)-2-oxopropyl phosphate + H2O. The enzyme catalyses L-histidinol phosphate + H2O = L-histidinol + phosphate. It participates in amino-acid biosynthesis; L-histidine biosynthesis; L-histidine from 5-phospho-alpha-D-ribose 1-diphosphate: step 6/9. It functions in the pathway amino-acid biosynthesis; L-histidine biosynthesis; L-histidine from 5-phospho-alpha-D-ribose 1-diphosphate: step 8/9. The chain is Histidine biosynthesis bifunctional protein HisB from Xylella fastidiosa (strain Temecula1 / ATCC 700964).